A 156-amino-acid chain; its full sequence is MENSQSQGKNKKKRLTQDQVRQLEKCFTMNKKLEPDLKLQLSNQLGLPQRQVAVWFQNKRARFKTQSLEVQHCTLQSKHEAALSDKAKLEHQVQFLQDELKRARNQLALFTNQDSPVDNSNLGSCDEDHDDQVVVFDELYACFVSNGHGSSSTSWV.

A DNA-binding region (homeobox) is located at residues Gly8–Ser67. The interval Leu68–Leu96 is leucine-zipper.

The protein belongs to the HD-ZIP homeobox family. Class I subfamily. Expressed in roots and flowers.

It localises to the nucleus. Functionally, probable transcription factor. The sequence is that of Homeobox-leucine zipper protein ATHB-52 (ATHB-52) from Arabidopsis thaliana (Mouse-ear cress).